The chain runs to 229 residues: Ras-related protein rab-39 (229 aa).

GTP is bound at residue D73–Q77. 2 S-geranylgeranyl cysteine lipidation sites follow: C227 and C229. C229 carries the post-translational modification Cysteine methyl ester.

The protein belongs to the small GTPase superfamily. Rab family. Interacts (in GTP-bound form) with Ras association domain-containing protein rsf-1.

Its subcellular location is the cell membrane. The protein localises to the cytoplasmic vesicle membrane. The protein resides in the golgi apparatus. Functionally, small GTPases Rab involved in autophagy. The small GTPases Rab are key regulators of intracellular membrane trafficking, from the formation of transport vesicles to their fusion with membranes. Rabs cycle between an inactive GDP-bound form and an active GTP-bound form that is able to recruit to membranes different sets of downstream effectors directly responsible for vesicle formation, movement, tethering and fusion. Involved in positively regulating the oxidative stress response, perhaps in concert with the Ras association domain-containing protein rsf-1. This chain is Ras-related protein rab-39, found in Caenorhabditis elegans.